A 1279-amino-acid polypeptide reads, in one-letter code: Botulinum-like toxin eBoNT/J (1279 aa).

H225 is a Zn(2+) binding site. E226 is a catalytic residue. Zn(2+) contacts are provided by H229 and E269. The cysteines at positions 424 and 438 are disulfide-linked. Residues 435 to 843 (LSSCIEILED…RLTSLPVFNL (409 aa)) are translocation domain (TD). Residues 476-525 (ADTILDSTLSNYDFSKEINFTSTVPIITVEDPLETDEDVPVISEDRTVYV) are belt; not required for channel formation. The tract at residues 860 to 1080 (IDIQDSEVLN…EVNRLYWKYF (221 aa)) is N-terminus of receptor binding domain (N-RBD). The interval 1081–1279 (EGSYLRDVWG…IPVDEGWKED (199 aa)) is C-terminus of receptor binding domain (C-RBD). The Host ganglioside-binding motif motif lies at 1250-1253 (SAWY).

It belongs to the peptidase M27 family. In terms of assembly, might be a disulfide-linked heterodimer of a light chain (LC) and heavy chain (HC). Zn(2+) is required as a cofactor.

The protein localises to the secreted. The protein resides in the host cytoplasm. It is found in the host cytosol. It localises to the host cell membrane. Its subcellular location is the host cytoplasmic vesicle membrane. It catalyses the reaction Limited hydrolysis of proteins of the neuroexocytosis apparatus, synaptobrevins, SNAP25 or syntaxin. No detected action on small molecule substrates.. Strongly resembles a botulinum-type toxin, with the appropriate domains and residues to have proteolytic function, although its C-terminus (which binds to a eukaryotic host cell) is different enough from clostrial botulinum toxins that it might bind another cell target. Might be a precursor of a toxin that binds to an unknown eukaryotic cell receptor(s), and be taken up into the host cell via the endocytic pathway. When the pH of the putative toxin-containing endosome drops a structural rearrangement occurs so that the N-terminus of the heavy chain forms pores that allows the light chain to translocate into the cytosol. Once in the cytosol the disulfide bond linking the 2 subunits is reduced and light chain cleaves its target protein. The protein is Botulinum-like toxin eBoNT/J of Enterococcus sp. (strain 3G1_DIV0629).